Consider the following 151-residue polypeptide: UPF0561 protein C2orf68 homolog (151 aa).

The tract at residues 1-89 (MEEEGEAQGR…TLKDEPNDNG (89 aa)) is disordered. Composition is skewed to basic and acidic residues over residues 32 to 46 (LARDDYDREVKQAKE) and 70 to 85 (RQREKAHTTETLKDEP).

This sequence belongs to the UPF0561 family.

The protein is UPF0561 protein C2orf68 homolog of Xenopus laevis (African clawed frog).